A 309-amino-acid polypeptide reads, in one-letter code: Porphobilinogen deaminase (309 aa).

At C244 the chain carries S-(dipyrrolylmethanemethyl)cysteine.

The protein belongs to the HMBS family. Monomer. Dipyrromethane is required as a cofactor.

The catalysed reaction is 4 porphobilinogen + H2O = hydroxymethylbilane + 4 NH4(+). Its pathway is porphyrin-containing compound metabolism; protoporphyrin-IX biosynthesis; coproporphyrinogen-III from 5-aminolevulinate: step 2/4. Tetrapolymerization of the monopyrrole PBG into the hydroxymethylbilane pre-uroporphyrinogen in several discrete steps. The chain is Porphobilinogen deaminase from Listeria welshimeri serovar 6b (strain ATCC 35897 / DSM 20650 / CCUG 15529 / CIP 8149 / NCTC 11857 / SLCC 5334 / V8).